We begin with the raw amino-acid sequence, 60 residues long: Arabinogalactan protein 14 (60 aa).

A signal peptide spans 1–28; it reads MEAMKMKLYVVVLVAVIAFSTVHQTVAA. 3 positions are modified to 4-hydroxyproline: Pro32, Pro34, and Pro36. O-linked (Ara...) hydroxyproline glycosylation is found at Pro32, Pro34, and Pro36. The GPI-anchor amidated serine moiety is linked to residue Ser38. The propeptide at 39–60 is removed in mature form; the sequence is DASSFIPTFFASVAVMAFGFFF.

This sequence belongs to the AG-peptide AGP family. Post-translationally, contains 4-hydroxyproline; hydroxylated on Pro-32, Pro-34 and Pro-36. In terms of processing, O-glycosylated on hydroxyprolines; noncontiguous hydroxylproline residues are glycosylated with arabinogalactan.

It is found in the cell membrane. Functionally, proteoglycan that seems to be implicated in diverse developmental roles such as differentiation, cell-cell recognition, embryogenesis and programmed cell death. Involved in the regulation of root hair elongation. The protein is Arabinogalactan protein 14 of Arabidopsis thaliana (Mouse-ear cress).